A 506-amino-acid polypeptide reads, in one-letter code: MAEFKRYLELDISQQHDFIYPLLFQEYIYALAHDHGLNRSIFLENAGYDNKSSLLIGKRLITHLITQMDQQKKFLVPDSDSNQKKNLGYNTNLYSQMIFEGFAVVMEIPFYLRLLSFLEGKERVKSHNXXXXXXXXXXXXXXXXXXXXXXDIQIPHPIHLEILVQTLRYWVKDASSLHLLRFFLHEYPIWNSLITQKKSIFSFSKKNQRFFLFLYNFHVCEYESIFVFLRQPTSHLRSISSETFLERISFYRKIELEVFTKDFKSILWLFKEPFLHYVRYRGKAILASKGTSLLMNKWKYYLLNFWQSYFYMWSQPRRIHINQLSNHFLDFLGYLSSVRLKPLMLRSQMIENSFLIENASKKFDTLMPITPMILSLYKAKFCNVLGHPMSKPAWSGLSDSDIIERFGRIYRNLSHYYSGSLKKMSLYRIKYILRLSCARTLARKRKSTVRAFLKRLGVGLLAEFFTEEEQVFYLTFQKVSFTSGELYRRRIWYLDIICINDLANYE.

Belongs to the intron maturase 2 family. MatK subfamily.

The protein localises to the plastid. The protein resides in the chloroplast. Its function is as follows. Usually encoded in the trnK tRNA gene intron. Probably assists in splicing its own and other chloroplast group II introns. This is Maturase K from Phyllodoce caerulea (Blue mountain heath).